Reading from the N-terminus, the 363-residue chain is UDP-N-acetylglucosamine--N-acetylmuramyl-(pentapeptide) pyrophosphoryl-undecaprenol N-acetylglucosamine transferase (363 aa).

UDP-N-acetyl-alpha-D-glucosamine is bound by residues 10–12 (TGG), Asn-124, Ser-195, Ile-249, and Gln-294.

This sequence belongs to the glycosyltransferase 28 family. MurG subfamily.

It is found in the cell membrane. The catalysed reaction is Mur2Ac(oyl-L-Ala-gamma-D-Glu-L-Lys-D-Ala-D-Ala)-di-trans,octa-cis-undecaprenyl diphosphate + UDP-N-acetyl-alpha-D-glucosamine = beta-D-GlcNAc-(1-&gt;4)-Mur2Ac(oyl-L-Ala-gamma-D-Glu-L-Lys-D-Ala-D-Ala)-di-trans,octa-cis-undecaprenyl diphosphate + UDP + H(+). Its pathway is cell wall biogenesis; peptidoglycan biosynthesis. Cell wall formation. Catalyzes the transfer of a GlcNAc subunit on undecaprenyl-pyrophosphoryl-MurNAc-pentapeptide (lipid intermediate I) to form undecaprenyl-pyrophosphoryl-MurNAc-(pentapeptide)GlcNAc (lipid intermediate II). The chain is UDP-N-acetylglucosamine--N-acetylmuramyl-(pentapeptide) pyrophosphoryl-undecaprenol N-acetylglucosamine transferase from Leuconostoc mesenteroides subsp. mesenteroides (strain ATCC 8293 / DSM 20343 / BCRC 11652 / CCM 1803 / JCM 6124 / NCDO 523 / NBRC 100496 / NCIMB 8023 / NCTC 12954 / NRRL B-1118 / 37Y).